Here is a 138-residue protein sequence, read N- to C-terminus: Small ribosomal subunit protein uS11c (138 aa).

Positions 1 to 22 are disordered; the sequence is MAKPILRVGSRKNTRSASRKNV. The span at 9–22 shows a compositional bias: basic residues; that stretch reads GSRKNTRSASRKNV.

This sequence belongs to the universal ribosomal protein uS11 family. As to quaternary structure, part of the 30S ribosomal subunit.

The protein localises to the plastid. Its subcellular location is the chloroplast. The chain is Small ribosomal subunit protein uS11c from Draba nemorosa (Woodland whitlowgrass).